Here is a 315-residue protein sequence, read N- to C-terminus: Ribose-phosphate pyrophosphokinase (315 aa).

ATP-binding positions include 37-39 (DGE) and 96-97 (RQ). Mg(2+) contacts are provided by histidine 131 and aspartate 170. Lysine 194 is an active-site residue. D-ribose 5-phosphate contacts are provided by residues arginine 196, aspartate 220, and 224–228 (DTGGT).

This sequence belongs to the ribose-phosphate pyrophosphokinase family. Class I subfamily. Homohexamer. It depends on Mg(2+) as a cofactor.

The protein resides in the cytoplasm. The catalysed reaction is D-ribose 5-phosphate + ATP = 5-phospho-alpha-D-ribose 1-diphosphate + AMP + H(+). It participates in metabolic intermediate biosynthesis; 5-phospho-alpha-D-ribose 1-diphosphate biosynthesis; 5-phospho-alpha-D-ribose 1-diphosphate from D-ribose 5-phosphate (route I): step 1/1. Its function is as follows. Involved in the biosynthesis of the central metabolite phospho-alpha-D-ribosyl-1-pyrophosphate (PRPP) via the transfer of pyrophosphoryl group from ATP to 1-hydroxyl of ribose-5-phosphate (Rib-5-P). The protein is Ribose-phosphate pyrophosphokinase of Shewanella oneidensis (strain ATCC 700550 / JCM 31522 / CIP 106686 / LMG 19005 / NCIMB 14063 / MR-1).